A 143-amino-acid polypeptide reads, in one-letter code: Hemoglobin subunit alpha-2 (143 aa).

Position 2 is an N-acetylserine (Ser-2). The region spanning 2–143 (SLTEKDKAAV…LSLALAEKYR (142 aa)) is the Globin domain. An O2-binding site is contributed by His-60. His-89 serves as a coordination point for heme b.

Belongs to the globin family. As to quaternary structure, hb2 is a heterotetramer of two alpha-2 chains and two beta-1 chains; Hb3 is a heterotetramer of two alpha-2 chains and two beta-2 chains. As to expression, red blood cells.

Functionally, involved in oxygen transport from gills to the various peripheral tissues. The sequence is that of Hemoglobin subunit alpha-2 (hba2) from Anarhichas minor (Arctic spotted wolffish).